A 735-amino-acid chain; its full sequence is Diacylglycerol kinase alpha (735 aa).

2 consecutive EF-hand domains span residues 110–145 and 155–190; these read RPED…MMRV and ELRP…TVPL. Ca(2+) is bound by residues Asp123, Asp125, Asn127, Glu134, Asp168, Asp170, Ser172, Ser174, and Glu179. 2 Phorbol-ester/DAG-type zinc fingers span residues 205–253 and 269–319; these read QHMW…ALPC and SHVW…GHEC. Positions 372 to 506 constitute a DAGKc domain; that stretch reads PNTHPLLVFV…MDRWSVEVIP (135 aa). Residue Lys484 is modified to N6-acetyllysine.

Belongs to the eukaryotic diacylglycerol kinase family. Monomer. Expressed in lymphocytes.

Its subcellular location is the cytoplasm. It localises to the cytosol. It catalyses the reaction a 1,2-diacyl-sn-glycerol + ATP = a 1,2-diacyl-sn-glycero-3-phosphate + ADP + H(+). The enzyme catalyses a 1-O-alkyl-sn-glycerol + ATP = a 1-O-alkyl-sn-glycero-3-phosphate + ADP + H(+). The catalysed reaction is 1-O-alkyl-2-acyl-sn-glycerol + ATP = 1-O-alkyl-2-acyl-sn-glycero-3-phosphate + ADP + H(+). It carries out the reaction 1,2-dihexadecanoyl-sn-glycerol + ATP = 1,2-dihexadecanoyl-sn-glycero-3-phosphate + ADP + H(+). It catalyses the reaction 1-hexadecanoyl-2-(9Z-octadecenoyl)-sn-glycerol + ATP = 1-hexadecanoyl-2-(9Z-octadecenoyl)-sn-glycero-3-phosphate + ADP + H(+). The enzyme catalyses 2-(9Z-octadecenoyl)-glycerol + ATP = 2-(9Z-octadecenoyl)-sn-glycero-3-phosphate + ADP + H(+). The catalysed reaction is 1,2-di-(9Z-octadecenoyl)-sn-glycerol + ATP = 1,2-di-(9Z-octadecenoyl)-sn-glycero-3-phosphate + ADP + H(+). It carries out the reaction 1-octadecanoyl-2-(5Z,8Z,11Z,14Z-eicosatetraenoyl)-sn-glycerol + ATP = 1-octadecanoyl-2-(5Z,8Z,11Z,14Z-eicosatetraenoyl)-sn-glycero-3-phosphate + ADP + H(+). It catalyses the reaction 1,2-didecanoyl-sn-glycerol + ATP = 1,2-didecanoyl-sn-glycero-3-phosphate + ADP + H(+). The enzyme catalyses 1-O-hexadecyl-2-acetyl-sn-glycerol + ATP = 1-O-hexadecyl-2-acetyl-sn-glycero-3-phosphate + ADP + H(+). The catalysed reaction is 1-O-hexadecyl-2-(5Z,8Z,11Z,14Z-eicosatetraenoyl)-sn-glycerol + ATP = 1-O-hexadecyl-2-(5Z,8Z,11Z,14Z-eicosatetraenoyl)-sn-glycero-3-phosphate + ADP + H(+). It carries out the reaction 1-O-hexadecyl-2-(9Z-octadecenoyl)-sn-glycerol + ATP = 1-O-hexadecyl-2-(9Z-octadecenoyl)-sn-glycero-3-phosphate + ADP + H(+). It catalyses the reaction 1-O-hexadecyl-sn-glycerol + ATP = 1-O-hexadecyl-sn-glycero-3-phosphate + ADP + H(+). It functions in the pathway lipid metabolism; glycerolipid metabolism. With respect to regulation, stimulated by calcium and phosphatidylserine. Its function is as follows. Diacylglycerol kinase that converts diacylglycerol/DAG into phosphatidic acid/phosphatidate/PA and regulates the respective levels of these two bioactive lipids. Thereby, acts as a central switch between the signaling pathways activated by these second messengers with different cellular targets and opposite effects in numerous biological processes. Also plays an important role in the biosynthesis of complex lipids. Can also phosphorylate 1-alkyl-2-acylglycerol in vitro as efficiently as diacylglycerol provided it contains an arachidonoyl group. Also involved in the production of alkyl-lysophosphatidic acid, another bioactive lipid, through the phosphorylation of 1-alkyl-2-acetyl glycerol. This chain is Diacylglycerol kinase alpha (DGKA), found in Homo sapiens (Human).